The following is a 205-amino-acid chain: MSDFGNPLKKFKLVFLGEQSVGKTSLITRFMYDSFDNTYQATIGIDFLSKTMYLEDRTVRLQLWDTAGQERFRSLIPSYIRDSTVAVVVYDITNSNSFHQTSKWIDDVRTERGSDVIIMLVGNKTDLSDKRQVTTDEGERKAKELNVMFIETSAKAGYNVKQLFRRIAGALPGIIKDDPVEPPNVVTMDPIRQRQIVTDEGSCWC.

GTP-binding positions include 18–25, threonine 42, 66–70, and 124–127; these read EQSVGKTS, TAGQE, and KTDL. Residues cysteine 203 and cysteine 205 are each lipidated (S-geranylgeranyl cysteine). Position 205 is a cysteine methyl ester (cysteine 205).

This sequence belongs to the small GTPase superfamily. Rab family. Interacts with GARP complex component vps-52. Interacts (in GTP-bound form) with lin-10. May interact (in GTP-bound form) with eat-17. In terms of tissue distribution, highly expressed in body wall muscles, pharyngeal and vulval muscles, hypodermis, intestine, the gonad, coelomocytes, and neurons, including command interneuron (at protein level). Highly expressed in the terminal bulb muscles.

It localises to the perikaryon. The protein resides in the cell projection. It is found in the dendrite. The protein localises to the golgi apparatus. Its subcellular location is the cytoplasmic vesicle. In terms of biological role, the small GTPases Rab are key regulators of intracellular membrane trafficking, from the formation of transport vesicles to their fusion with membranes. Rabs cycle between an inactive GDP-bound form and an active GTP-bound form that is able to recruit to membranes different set of downstream effectors directly responsible for vesicle formation, movement, tethering and fusion. In its active GTP-bound form, acts redundantly with rab-6.1 (in its active GTP-bound form) to positively regulate the retrograde trafficking of cargo molecules from endosomes to the Golgi compartment. Required for the retrograde trafficking of glr-1, a subunit of AMPA-type glutamate receptors (AMPRs), out of early endosomes and into the Golgi compartment in neurons. Its role in glr-1 trafficking may partly be mediated by its interaction with lin-10 and association with components of the retromer complex such as rme-8. Together with rab-6.2, promotes the retrograde trafficking of mig-14 from endosomes to Golgi structures in the intestine. Plays a role in the epidermis to promote cuticle integrity and impermeability of the cuticle barrier to exogenous molecules. May have a role in the glycosylation of the cuticular surface. Required for seam cell division and alae formation. Required for grinder formation, which is the feeding organ that breaks down food. In contrast to rab-6.1, may play a minor role in the exocytosis of secretory vesicles (cortical granules) during the oocyte-to-embryo transition. This Caenorhabditis elegans protein is Ras-related protein rab-6.2.